The primary structure comprises 231 residues: Cytochrome c oxidase assembly factor 7A (231 aa).

Sel1-like repeat units lie at residues 34–66 (PDGCNRLAEYFENIKKNFESAAGILKINCDQNE), 68–104 (SESFYKLGAYYVTGKGGLPVDLKAAYSCFLKSCNKGG), 108–145 (IDSCHNVGLLAHDGRVNDEKADAVTARDYYNKACDGNF), 146–182 (AASCFNLSATYLQGAPGIPKDMNKALHFSEKACSLGH), and 183–218 (VWGCANASRMYKLGDGVAKNDEKAESLKNRARDLHK).

The protein belongs to the hcp beta-lactamase family.

It localises to the mitochondrion intermembrane space. Functionally, may be required for assembly of mitochondrial respiratory chain complexes. This is Cytochrome c oxidase assembly factor 7A (coa7-a) from Xenopus laevis (African clawed frog).